Consider the following 328-residue polypeptide: Ferredoxin--NADP reductase 2 (328 aa).

FAD-binding residues include Thr16, Glu35, Gln43, Tyr48, Ile88, Phe123, Asp284, and Thr325.

It belongs to the ferredoxin--NADP reductase type 2 family. Homodimer. FAD serves as cofactor.

It catalyses the reaction 2 reduced [2Fe-2S]-[ferredoxin] + NADP(+) + H(+) = 2 oxidized [2Fe-2S]-[ferredoxin] + NADPH. In Oceanobacillus iheyensis (strain DSM 14371 / CIP 107618 / JCM 11309 / KCTC 3954 / HTE831), this protein is Ferredoxin--NADP reductase 2.